Consider the following 770-residue polypeptide: Amyloid-beta precursor protein (770 aa).

Residues 1–17 form the signal peptide; sequence MLPGLALLLLAAWTARA. Residues 18–701 lie on the Extracellular side of the membrane; sequence LEVPTDGNAG…AEDVGSNKGA (684 aa). A GFLD subdomain region spans residues 28–123; the sequence is LLAEPQIAMF…PYRCLVGEFV (96 aa). The region spanning 28-189 is the E1 domain; the sequence is LLAEPQIAMF…RGVEFVCCPL (162 aa). 6 cysteine pairs are disulfide-bonded: cysteine 38–cysteine 62, cysteine 73–cysteine 117, cysteine 98–cysteine 105, cysteine 133–cysteine 187, cysteine 144–cysteine 174, and cysteine 158–cysteine 186. 96–110 is a binding site for heparin; that stretch reads NWCKRGRKQCKTHPH. A cuBD subdomain region spans residues 131–189; the sequence is DKCKFLHQERMDVCETHLHWHTVAKETCSEKSTNLHDYGMLLPCGIDKFRGVEFVCCPL. Residues histidine 147, histidine 151, and tyrosine 168 each contribute to the Cu(2+) site. Positions 181-188 are zinc-binding; sequence GVEFVCCP. The Zn(2+) site is built by glutamate 183, cysteine 186, and cysteine 187. A compositionally biased stretch (acidic residues) spans 194-207; sequence DNVDSADAEEDDSD. Residues 194–284 form a disordered region; it reads DNVDSADAEE…TTTTTTESVE (91 aa). Residue serine 198 is modified to Phosphoserine; by CK2. Serine 206 bears the Phosphoserine; by CK1 mark. Sulfotyrosine is present on residues tyrosine 217 and tyrosine 262. Positions 228–264 are enriched in acidic residues; sequence VAEEEEVAEVEEEEADDDEDDEDGDEVEEEAEEPYEE. Over residues 268–281 the composition is skewed to low complexity; the sequence is RTTSIATTTTTTTE. Cystine bridges form between cysteine 291–cysteine 341, cysteine 300–cysteine 324, and cysteine 316–cysteine 337. The BPTI/Kunitz inhibitor domain maps to 291-341; sequence CSEQAETGPCRAMISRWYFDVTEGKCAPFFYGGCGGNRNNFDTEEYCMAVC. Tyrosine 336 carries the post-translational modification Sulfotyrosine. Residues 344 to 365 carry the OX-2 motif; it reads VMSQSLRKTTREPLTRDPVKLP. Positions 374–565 constitute an E2 domain; it reads AVDKYLETPG…EEIQDEVDEL (192 aa). The interval 391 to 423 is heparin-binding; the sequence is FQKAKERLEAKHRERMSQVMREWEEAERQAKNL. A Phosphoserine modification is found at serine 441. A heparin-binding region spans residues 491-522; that stretch reads FNMLKKYVRAEQKDRQHTLKHFEHVRMVDPKK. At tyrosine 497 the chain carries Phosphotyrosine. The collagen-binding stretch occupies residues 523–540; that stretch reads AAQIRSQVMTHLRVIYER. Asparagine 542 and asparagine 571 each carry an N-linked (GlcNAc...) asparagine glycan. Cu(2+) contacts are provided by histidine 677, tyrosine 681, histidine 684, and histidine 685. Residues histidine 677, tyrosine 681, histidine 684, and histidine 685 each contribute to the Zn(2+) site. Residues 695–722 are interaction with PSEN1; sequence VGSNKGAIIGLMVGGVVIATVIVITLVM. Residues 702–722 traverse the membrane as a helical segment; it reads IIGLMVGGVVIATVIVITLVM. At 723–770 the chain is on the cytoplasmic side; that stretch reads LKKKQYTSIHHGVVEVDAAVTPEERHLSKMQQNGYENPTYKFFEQMQN. The short motif at 724 to 734 is the Basolateral sorting signal element; the sequence is KKKQYTSIHHG. Threonine 729 carries the post-translational modification Phosphothreonine. Residue serine 730 is modified to Phosphoserine; by APP-kinase I. Residues 732–751 are interaction with G(o)-alpha; sequence HHGVVEVDAAVTPEERHLSK. Threonine 743 bears the Phosphothreonine; by CDK5 and MAPK10 mark. Positions 756 to 770 are required for the interaction with KIF5B and for anterograde transport in axons; the sequence is GYENPTYKFFEQMQN. Phosphotyrosine; by ABL1 is present on tyrosine 757. Residues 757-762 carry the YENPXY motif; contains endocytosis signal motif; sequence YENPTY. A Glycyl lysine isopeptide (Lys-Gly) (interchain with G-Cter in ubiquitin) cross-link involves residue lysine 763.

The protein belongs to the APP family. In terms of assembly, binds, via its C-terminus, to the PID domain of several cytoplasmic proteins, including APBB family members, the APBA family, MAPK8IP1, SHC1 and NUMB and DAB1. Binding to DAB1 inhibits its serine phosphorylation. Interacts (via NPXY motif) with DAB2 (via PID domain); the interaction is impaired by tyrosine phosphorylation of the NPXY motif. Also interacts with GPCR-like protein BPP, APPBP1, IB1, KNS2 (via its TPR domains), APPBP2 (via BaSS) and DDB1. In vitro, it binds MAPT via the MT-binding domains. Associates with microtubules in the presence of ATP and in a kinesin-dependent manner. Interacts, through a C-terminal domain, with GNAO1. Amyloid-beta protein 42 binds CHRNA7 in hippocampal neurons. Amyloid-beta associates with HADH2. Interacts with CPEB1, ANKS1B and AGER. Interacts with ITM2B. Interacts with ITM2C. Interacts with IDE. Can form homodimers; dimerization is enhanced in the presence of Cu(2+) ions. Can form homodimers; this is promoted by heparin binding. Amyloid-beta protein 40 interacts with S100A9. CTF-alpha product of APP interacts with GSAP. Isoform APP695 interacts with SORL1 (via N-terminal ectodomain); this interaction retains APP in the trans-Golgi network and reduces processing into soluble APP-alpha and amyloid-beta peptides. Isoform APP770 interacts with SORL1. The C99 fragment also interacts with SORL1. Interacts with PLD3. Interacts with VDAC1. Interacts with NSG1; could regulate APP processing. Amyloid-beta protein 42 interacts with FPR2. Interacts (via transmembrane region) with PSEN1; the interaction is direct. Interacts with LRRK2. Interacts (via cytoplasmic domain) with KIF5B. Interacts (via C-terminus) with APBB2/FE65L1 (via C-terminus). Interacts (via intracellular domain) with APBB3. In terms of processing, proteolytically processed under normal cellular conditions. Cleavage either by alpha-secretase, beta-secretase or theta-secretase leads to generation and extracellular release of soluble APP peptides, S-APP-alpha and S-APP-beta, and the retention of corresponding membrane-anchored C-terminal fragments, C80, C83 and C99. Subsequent processing of C80 and C83 by gamma-secretase yields P3 peptides. This is the major secretory pathway and is non-amyloidogenic. Alternatively, presenilin/nicastrin-mediated gamma-secretase processing of C99 releases the amyloid-beta proteins, amyloid-beta protein 40 and amyloid-beta protein 42, major components of amyloid plaques, and the cytotoxic C-terminal fragments, gamma-CTF(50), gamma-CTF(57) and gamma-CTF(59). PSEN1 cleavage is more efficient with C83 than with C99 as substrate (in vitro). Amyloid-beta protein 40 and Amyloid-beta protein 42 are cleaved by ACE. Many other minor amyloid-beta peptides, amyloid-beta 1-X peptides, are found in cerebral spinal fluid (CSF) including the amyloid-beta X-15 peptides, produced from the cleavage by alpha-secretase. Proteolytically cleaved by caspases during neuronal apoptosis. Cleavage at Asp-739 by either caspase-3, -8 or -9 results in the production of the neurotoxic C31 peptide and the increased production of amyloid-beta peptides. Post-translationally, N- and O-glycosylated. In terms of processing, phosphorylation in the C-terminal on tyrosine, threonine and serine residues is neuron-specific. Phosphorylation can affect APP processing, neuronal differentiation and interaction with other proteins. Phosphorylated on Thr-743 in neuronal cells by Cdc5 kinase and Mapk10, in dividing cells by Cdc2 kinase in a cell-cycle dependent manner with maximal levels at the G2/M phase and, in vitro, by GSK-3-beta. The Thr-743 phosphorylated form causes a conformational change which reduces binding of Fe65 family members. In dopaminergic (DA) neurons, phosphorylation on Thr-743 by LRKK2 promotes the production and the nuclear translocation of the APP intracellular domain (AICD) which induces DA neuron apoptosis. Phosphorylation on Tyr-757 is required for SHC binding. Phosphorylated in the extracellular domain by casein kinases on both soluble and membrane-bound APP. This phosphorylation is inhibited by heparin. Trophic-factor deprivation triggers the cleavage of surface APP by beta-secretase to release sAPP-beta which is further cleaved to release an N-terminal fragment of APP (N-APP). Post-translationally, amyloid-beta peptides are degraded by IDE. In terms of processing, sulfated on tyrosine residues.

It is found in the cell membrane. The protein localises to the membrane. The protein resides in the perikaryon. Its subcellular location is the cell projection. It localises to the growth cone. It is found in the clathrin-coated pit. The protein localises to the early endosome. The protein resides in the cytoplasmic vesicle. Its subcellular location is the endoplasmic reticulum. It localises to the golgi apparatus. It is found in the secreted. The protein localises to the cell surface. The protein resides in the nucleus. Its subcellular location is the cytoplasm. Its function is as follows. Functions as a cell surface receptor and performs physiological functions on the surface of neurons relevant to neurite growth, neuronal adhesion and axonogenesis. Interaction between APP molecules on neighboring cells promotes synaptogenesis. Involved in cell mobility and transcription regulation through protein-protein interactions. Can promote transcription activation through binding to APBB1-KAT5 and inhibit Notch signaling through interaction with Numb. Couples to apoptosis-inducing pathways such as those mediated by G(o) and JIP. Inhibits G(o)-alpha ATPase activity. Acts as a kinesin I membrane receptor, mediating the axonal transport of beta-secretase and presenilin 1. By acting as a kinesin I membrane receptor, plays a role in axonal anterograde transport of cargo towards synapses in axons. May be involved in copper homeostasis/oxidative stress through copper ion reduction. In vitro, copper-metallated APP induces neuronal death directly or is potentiated through Cu(2+)-mediated low-density lipoprotein oxidation. Can regulate neurite outgrowth through binding to components of the extracellular matrix such as heparin and collagen I and IV. Induces a AGER-dependent pathway that involves activation of p38 MAPK, resulting in internalization of amyloid-beta peptide and mitochondrial dysfunction in cultured cortical neurons. Provides Cu(2+) ions for GPC1 which are required for release of nitric oxide (NO) and subsequent degradation of the heparan sulfate chains on GPC1. In terms of biological role, amyloid-beta peptides are lipophilic metal chelators with metal-reducing activity. Binds transient metals such as copper, zinc and iron. Functionally, the gamma-CTF peptides as well as the caspase-cleaved peptides, including C31, are potent enhancers of neuronal apoptosis. In Macaca fascicularis (Crab-eating macaque), this protein is Amyloid-beta precursor protein.